The sequence spans 394 residues: Elongation factor Tu (394 aa).

Positions 10–204 (KPHVNVGTIG…ALDTYIPEPE (195 aa)) constitute a tr-type G domain. The interval 19 to 26 (GHVDHGKT) is G1. Residue 19-26 (GHVDHGKT) coordinates GTP. Thr26 contacts Mg(2+). Residues 60–64 (GITIN) are G2. The G3 stretch occupies residues 81-84 (DCPG). GTP is bound by residues 81–85 (DCPGH) and 136–139 (NKCD). The interval 136–139 (NKCD) is G4. A G5 region spans residues 174 to 176 (SAL).

Belongs to the TRAFAC class translation factor GTPase superfamily. Classic translation factor GTPase family. EF-Tu/EF-1A subfamily. Monomer.

It is found in the cytoplasm. The catalysed reaction is GTP + H2O = GDP + phosphate + H(+). GTP hydrolase that promotes the GTP-dependent binding of aminoacyl-tRNA to the A-site of ribosomes during protein biosynthesis. This is Elongation factor Tu from Shewanella halifaxensis (strain HAW-EB4).